Reading from the N-terminus, the 390-residue chain is Argininosuccinate synthase (390 aa).

Position 6 to 14 (6 to 14 (SYSGGLDTT)) interacts with ATP. Position 83 (Y83) interacts with L-citrulline. ATP is bound at residue G113. L-aspartate-binding residues include T115, N119, and D120. Residue N119 coordinates L-citrulline. R123, S169, S178, E254, and Y266 together coordinate L-citrulline.

It belongs to the argininosuccinate synthase family. Type 1 subfamily. In terms of assembly, homotetramer.

It localises to the cytoplasm. It catalyses the reaction L-citrulline + L-aspartate + ATP = 2-(N(omega)-L-arginino)succinate + AMP + diphosphate + H(+). Its pathway is amino-acid biosynthesis; L-arginine biosynthesis; L-arginine from L-ornithine and carbamoyl phosphate: step 2/3. This chain is Argininosuccinate synthase, found in Archaeoglobus fulgidus (strain ATCC 49558 / DSM 4304 / JCM 9628 / NBRC 100126 / VC-16).